The sequence spans 54 residues: Ferredoxin (54 aa).

4Fe-4S ferredoxin-type domains lie at histidine 2–threonine 28 and lysine 29–glutamate 54. Residues cysteine 8, cysteine 11, cysteine 14, cysteine 18, cysteine 36, cysteine 39, cysteine 42, and cysteine 46 each coordinate [4Fe-4S] cluster.

Requires [4Fe-4S] cluster as cofactor.

Functionally, ferredoxins are iron-sulfur proteins that transfer electrons in a wide variety of metabolic reactions. This chain is Ferredoxin, found in Megasphaera elsdenii.